The sequence spans 626 residues: MAVLPLLLCLLPLAPASSPPQPATSSPCPRRCRCQTQSLPLSVLCPGAGLLFVPPSLDRRAAELRLADNFIAAVRRRDLANMTGLLHLSLSRNTIRHVAAGAFADLRALRALHLDGNRLTSLGEGQLRGLVNLRHLILSNNQLAALAAGALDDCAETLEDLDLSYNNLEQLPWEALGRLGNVNTLGLDHNLLASVPAGAFSRLHKLARLDMTSNRLTTIPPDPLFSRLPLLARPRGSPASALVLAFGGNPLHCNCELVWLRRLAREDDLEACASPPALGGRYFWAVGEEEFVCEPPVVTHRSPPLAVPAGRPAALRCRAVGDPEPRVRWVSPQGRLLGNSSRARAFPNGTLELLVTEPEDGGTFTCIAANAAGEATAAVELTVGPPPPPQLANSTSCDPPRDGEPDALTPPSAASASAKVADTVAPTDRGVQVTEHGATAALVQWPDQRPVPGIRMYQIQYNSSADDILVYRMIPADSRSFLLTDLASGRTYDLCVLAVYEDSATGLTATRPVGCARFSTEPALRPCAAPHAPFLGGTMIIALGGVIVASVLVFIFVLLLRYKVHGVQPPGKAKATAPVSSVCSQTNGALGPVPSAPAPEPAAPRAHTVVQLDCEPWGPSHEPAGP.

The N-terminal stretch at 1–16 is a signal peptide; sequence MAVLPLLLCLLPLAPA. Residues 17 to 539 are Extracellular-facing; it reads SSPPQPATSS…PHAPFLGGTM (523 aa). The region spanning 19-59 is the LRRNT domain; it reads PPQPATSSPCPRRCRCQTQSLPLSVLCPGAGLLFVPPSLDR. LRR repeat units follow at residues 84 to 105, 108 to 129, 132 to 153, 157 to 178, 181 to 202, and 205 to 226; these read GLLH…AFAD, ALRA…QLRG, NLRH…ALDD, TLED…ALGR, NVNT…AFSR, and KLAR…PLFS. In terms of domain architecture, LRRCT spans 249-295; it reads NPLHCNCELVWLRRLAREDDLEACASPPALGGRYFWAVGEEEFVCEP. The 88-residue stretch at 295–382 folds into the Ig-like domain; sequence PPVVTHRSPP…GEATAAVELT (88 aa). A Fibronectin type-III 1 domain is found at 308 to 395; it reads PAGRPAALRC…PPPPQLANST (88 aa). Cysteines 317 and 366 form a disulfide. Asparagine 339, asparagine 348, and asparagine 393 each carry an N-linked (GlcNAc...) asparagine glycan. Positions 382-423 are disordered; that stretch reads TVGPPPPPQLANSTSCDPPRDGEPDALTPPSAASASAKVADT. Residues 406–423 are compositionally biased toward low complexity; that stretch reads DALTPPSAASASAKVADT. The Fibronectin type-III 2 domain maps to 425–523; the sequence is APTDRGVQVT…GCARFSTEPA (99 aa). A helical membrane pass occupies residues 540–560; the sequence is IIALGGVIVASVLVFIFVLLL. Residues 561 to 626 are Cytoplasmic-facing; sequence RYKVHGVQPP…WGPSHEPAGP (66 aa).

The protein belongs to the LRFN family. In terms of assembly, can form heteromeric complexes with LRFN1, LRFN2, LRFN4 and LRFN5. Able to form homomeric complexes across cell junctions, between adjacent cells. Does not interact with DLG4. Post-translationally, N-glycosylated. As to expression, expressed in brain. Within brain, expressed in hippocampus, cerebellum, olfactory bulb and forebrain (at protein level).

The protein resides in the cell membrane. It localises to the cell projection. It is found in the axon. Its subcellular location is the dendrite. The protein localises to the synapse. The protein resides in the presynaptic cell membrane. It localises to the postsynaptic cell membrane. Functionally, cell adhesion molecule that mediates homophilic cell-cell adhesion in a Ca(2+)-independent manner. Promotes neurite outgrowth in hippocampal neurons. The sequence is that of Leucine-rich repeat and fibronectin type-III domain-containing protein 3 from Rattus norvegicus (Rat).